Reading from the N-terminus, the 759-residue chain is Forkhead box protein M1 (759 aa).

2 disordered regions span residues 1–54 and 94–165; these read MRTS…AESS and KGKE…QRQE. Residues 36–54 show a composition bias toward polar residues; the sequence is PGQQEPTQAQASQDVAESS. A compositionally biased stretch (low complexity) spans 141-151; that stretch reads LGPKPGAKGVP. Residues Lys-200 and Lys-324 each participate in a glycyl lysine isopeptide (Lys-Gly) (interchain with G-Cter in SUMO2) cross-link. The fork-head DNA-binding region spans 234 to 326; the sequence is ERPPYSYMAM…LTLDQVFKPL (93 aa). Positions 328-349 are disordered; that stretch reads PGSPQSPEHLESQQKRPNPELR. Ser-330 carries the post-translational modification Phosphoserine. Over residues 335–349 the composition is skewed to basic and acidic residues; that stretch reads EHLESQQKRPNPELR. A Glycyl lysine isopeptide (Lys-Gly) (interchain with G-Cter in SUMO2) cross-link involves residue Lys-355. Ser-375 carries the phosphoserine; by CHEK2 modification. Glycyl lysine isopeptide (Lys-Gly) (interchain with G-Cter in SUMO2) cross-links involve residues Lys-421 and Lys-439. Phosphoserine is present on Ser-521. Disordered stretches follow at residues 530-556, 572-643, and 681-706; these read LVTK…CLDE, MEIL…PQGA, and LASD…LQVP. The segment covering 531–542 has biased composition (basic and acidic residues); sequence VTKRREKREVSR. Over residues 604–613 the composition is skewed to polar residues; sequence PVSSTPSKSV. Position 608 is a phosphothreonine; by CDK1 (Thr-608). Thr-624 bears the Phosphothreonine mark. A phosphoserine; by PLK1 mark is found at Ser-726 and Ser-735.

Post-translationally, phosphorylated in M (mitotic) phase. Phosphorylation by the checkpoint kinase CHEK2 in response to DNA damage increases the FOXM1 protein stability probably stimulating the transcription of genes involved in DNA repair. Phosphorylated by CDK1 in late S and G2 phases, creating docking sites for the POLO box domains of PLK1. Subsequently, PLK1 binds and phosphorylates FOXM1, leading to activation of transcriptional activity and subsequent enhanced expression of key mitotic regulators. Phosphorylated by GSK3B leading to ubiquitination and proteasomal degradation. Highly expressed in thymus and testis, but weakly in intestine and lung. Appears to be expressed only in adult organs containing proliferating/cycling cells or in response to growth factors.

The protein localises to the nucleus. Transcription factor regulating the expression of cell cycle genes essential for DNA replication and mitosis. Plays a role in the control of cell proliferation. Also plays a role in DNA break repair, participating in the DNA damage checkpoint response. Promotes transcription of PHB2. The protein is Forkhead box protein M1 (Foxm1) of Rattus norvegicus (Rat).